An 878-amino-acid polypeptide reads, in one-letter code: Multiple RNA-binding domain-containing protein 1 (878 aa).

The RRM 1 domain maps to 2–90 (SRVIVKGLPI…SKIEVSMAKS (89 aa)). 3 disordered regions span residues 118–143 (LLAD…KHDI), 159–269 (TMKP…AKDE), and 287–323 (GADT…EKSL). Polar residues predominate over residues 159-177 (TMKPSSQVTSWETVQSSKT). Residues 180–190 (EDEEAADDEVG) show a composition bias toward acidic residues. The span at 295–304 (QQQQPDTEQQ) shows a compositional bias: low complexity. Positions 305-319 (QPEETEVETSQESEE) are enriched in acidic residues. RRM domains lie at 330 to 408 (GRLF…PADA), 516 to 588 (RVIL…KGPS), 651 to 734 (VSIF…LSHR), and 752 to 829 (GKII…FVEQ). The tract at residues 732 to 751 (SHRQGTSTTNASSKKKKKNQ) is disordered. Residues 852 to 878 (TKIANMRNSGKRKIDLDEDDENDGLQG) form a disordered region. A compositionally biased stretch (acidic residues) spans 867–878 (LDEDDENDGLQG).

This sequence belongs to the RRM MRD1 family.

It is found in the nucleus. Involved in pre-rRNA processing. This is Multiple RNA-binding domain-containing protein 1 (MRD1) from Kluyveromyces lactis (strain ATCC 8585 / CBS 2359 / DSM 70799 / NBRC 1267 / NRRL Y-1140 / WM37) (Yeast).